A 391-amino-acid polypeptide reads, in one-letter code: uncharacterized protein (391 aa).

A helical transmembrane segment spans residues 4–24 (FALIVGIVALAIFSFLYIQLY).

It is found in the membrane. This is an uncharacterized protein from Haemophilus influenzae (strain ATCC 51907 / DSM 11121 / KW20 / Rd).